Reading from the N-terminus, the 326-residue chain is Methionine import ATP-binding protein MetN (326 aa).

The ABC transporter domain maps to 1–226 (MVFYTIGPQT…PQQPITRQFV (226 aa)). 23-30 (GYSGAGKS) contributes to the ATP binding site.

Belongs to the ABC transporter superfamily. Methionine importer (TC 3.A.1.24) family. The complex is composed of two ATP-binding proteins (MetN), two transmembrane proteins (MetI) and a solute-binding protein (MetQ).

It localises to the cell inner membrane. The catalysed reaction is L-methionine(out) + ATP + H2O = L-methionine(in) + ADP + phosphate + H(+). It carries out the reaction D-methionine(out) + ATP + H2O = D-methionine(in) + ADP + phosphate + H(+). Its function is as follows. Part of the ABC transporter complex MetNIQ involved in methionine import. Responsible for energy coupling to the transport system. In Erwinia pyrifoliae (strain DSM 12162 / Ep1/96), this protein is Methionine import ATP-binding protein MetN.